The primary structure comprises 530 residues: Glutamyl-tRNA reductase 2, chloroplastic (530 aa).

A chloroplast-targeting transit peptide spans 1–64 (MAVSSAFVVT…RCEISPSNKA (64 aa)). Residues 134-137 (TCNR), Ser194, 199-201 (EGQ), and Gln205 contribute to the substrate site. Cys135 functions as the Nucleophile in the catalytic mechanism. 277–282 (GAGKMG) is an NADP(+) binding site.

Belongs to the glutamyl-tRNA reductase family. Expressed in roots and flowers. Detected in leaves, hypocotyls and cotyledons.

The protein localises to the plastid. Its subcellular location is the chloroplast. The catalysed reaction is (S)-4-amino-5-oxopentanoate + tRNA(Glu) + NADP(+) = L-glutamyl-tRNA(Glu) + NADPH + H(+). It participates in porphyrin-containing compound metabolism; protoporphyrin-IX biosynthesis; 5-aminolevulinate from L-glutamyl-tRNA(Glu): step 1/2. The protein operates within porphyrin-containing compound metabolism; chlorophyll biosynthesis. Functionally, catalyzes the NADPH-dependent reduction of glutamyl-tRNA(Glu) to glutamate 1-semialdehyde (GSA). Probably involved in wound-induced supply of heme to defensive hemoproteins outside plastids. The polypeptide is Glutamyl-tRNA reductase 2, chloroplastic (HEMA2) (Arabidopsis thaliana (Mouse-ear cress)).